A 61-amino-acid polypeptide reads, in one-letter code: Pleurocidin-like peptide WF3 (61 aa).

The N-terminal stretch at Met1 to Cys22 is a signal peptide. Positions Tyr48–Glu61 are excised as a propeptide.

It belongs to the pleurocidin family.

The protein localises to the secreted. Its function is as follows. Antimicrobial peptide. In Pseudopleuronectes americanus (Winter flounder), this protein is Pleurocidin-like peptide WF3 (ple3).